Here is a 1252-residue protein sequence, read N- to C-terminus: Putative late blight resistance protein homolog R1B-11 (1252 aa).

Positions 543-566 (RYSDSLAFLKNQLQVIQTEFESLQ) form a coiled coil. NB-ARC domains lie at 684–736 (SVRR…RSRI) and 786–830 (SYHV…SSEG). LRR repeat units lie at residues 955-980 (FKFL…PYLR), 998-1026 (LWNL…VWDM), 1077-1100 (LKHL…KVSS), 1103-1125 (FPKL…ADDA), 1126-1149 (FPNL…CFTD), 1187-1212 (LVII…RLSS), and 1213-1236 (LPGI…DVDA). One can recognise an HMA domain in the interval 1188-1252 (VIIKKLVLKF…VGKLNKRDML (65 aa)).

Belongs to the disease resistance NB-LRR family.

The protein resides in the cytoplasm. The protein localises to the membrane. Confers resistance to late blight (Phytophthora infestans) races carrying the avirulence gene Avr1. Resistance proteins guard the plant against pathogens that contain an appropriate avirulence protein via an indirect interaction with this avirulence protein. That triggers a defense system including the hypersensitive response, which restricts the pathogen growth. This is Putative late blight resistance protein homolog R1B-11 (R1B-11) from Solanum demissum (Wild potato).